The sequence spans 74 residues: Hadrucalcin (74 aa).

Residues 1–27 (MKTSSLTIIFIAVIITIICLNIHDIEA) form the signal peptide. A propeptide spanning residues 28 to 39 (REIEFNAGRVVR) is cleaved from the precursor. Disulfide bonds link Cys44–Cys58, Cys51–Cys62, and Cys57–Cys73. The tract at residues 64 to 65 (RR) is essential for stimulation of [3H]ryanodine binding to RYR1.

As to expression, expressed by the venom gland.

The protein localises to the secreted. In terms of biological role, this toxin activates ryanodine receptors RyR1 and RyR2 by inducing a long-lasting subconductance state (35% of the full conductance stateon RyR1). Furthermore, it triggers calcium release from sarcoplasmic vesicles (11.8 nM are enough to induce a sharp release on RyR1, and 55% of the total calcium is released after toxin (100 nM) addition on RyR1) probably by acting as a cell-penetrating peptide (CPP). In addition, it has been shown to dose-dependently stimulate ryanodine binding to RyR1 (EC(50)=14.8 nM). It also augments the bell-shaped calcium-[3H]ryanodine binding curve that is maximal at about 10 uM calcium concentration. It binds a different site as ryanodine. It acts synergistically with caffeine. In vivo, intracerebroventricular injection into mice induces neurotoxic symptoms, followed by death. The polypeptide is Hadrucalcin (Hoffmannihadrurus gertschi (Scorpion)).